A 213-amino-acid chain; its full sequence is Large ribosomal subunit protein uL3 (213 aa).

Positions 122–147 (AIKRHGQSRGPMAHGSRYHRRPGSMG) are disordered.

Belongs to the universal ribosomal protein uL3 family. As to quaternary structure, part of the 50S ribosomal subunit. Forms a cluster with proteins L14 and L19.

Functionally, one of the primary rRNA binding proteins, it binds directly near the 3'-end of the 23S rRNA, where it nucleates assembly of the 50S subunit. In Geobacillus stearothermophilus (Bacillus stearothermophilus), this protein is Large ribosomal subunit protein uL3.